The primary structure comprises 656 residues: UV-damage endonuclease (656 aa).

Disordered regions lie at residues 1–82 (MPSR…GKEQ), 119–146 (PSVV…KEPV), 175–194 (IIEP…RPPA), 241–264 (PLQF…EPQD), 492–515 (EPCD…TLPP), 550–620 (DMVP…GPYN), and 636–656 (KREV…EFDG). A compositionally biased stretch (low complexity) spans 13-32 (TPQSESSTFSSTLDSSAPSP). Composition is skewed to basic and acidic residues over residues 48 to 82 (SEKD…GKEQ) and 135 to 146 (TNAEEREAKEPV). Residues 550–561 (DMVPYDRDDENR) show a composition bias toward basic and acidic residues. A compositionally biased stretch (basic residues) spans 568–579 (APKKKKGGKRKR). The span at 583–595 (EEAAEPEEVDTAA) shows a compositional bias: acidic residues. Residues 596 to 614 (DDVKDAPEGPKEVPEEERA) show a composition bias toward basic and acidic residues. Positions 647–656 (EVEDEGEFDG) are enriched in acidic residues.

This sequence belongs to the uve1/UvsE family. Mg(2+) serves as cofactor.

In terms of biological role, endonuclease for the repair of UV-irradiated DNA. Involved in the excision of cyclobutane pyrimidine dimers (CPD) and 6-4 pyrimidine pyrimidones (6-4PP) which forms the UV damage repair (UVDR) pathway. In Neurospora crassa (strain ATCC 24698 / 74-OR23-1A / CBS 708.71 / DSM 1257 / FGSC 987), this protein is UV-damage endonuclease (mus-18).